Consider the following 289-residue polypeptide: Serine/threonine-protein phosphatase Pgam5, mitochondrial (289 aa).

A helical membrane pass occupies residues 7 to 23; that stretch reads FACGTGAGLAAYYLQRL.

It belongs to the phosphoglycerate mutase family. BPG-dependent PGAM subfamily. Interacts with Pk92B/ASK1.

It localises to the mitochondrion outer membrane. It carries out the reaction O-phospho-L-seryl-[protein] + H2O = L-seryl-[protein] + phosphate. The catalysed reaction is O-phospho-L-threonyl-[protein] + H2O = L-threonyl-[protein] + phosphate. Displays phosphatase activity for serine/threonine residues, and dephosphorylates and activates Pk92B kinase. Has apparently no phosphoglycerate mutase activity. This Drosophila simulans (Fruit fly) protein is Serine/threonine-protein phosphatase Pgam5, mitochondrial.